The sequence spans 727 residues: NADH-ubiquinone oxidoreductase 75 kDa subunit, mitochondrial (727 aa).

A mitochondrion-targeting transit peptide spans 1–23 (MLRIPVRKALVGLSKSPKGCVRT). The 2Fe-2S ferredoxin-type domain maps to 30–108 (NLIEVFVDGQ…GWNILTNSEK (79 aa)). [2Fe-2S] cluster is bound by residues Cys64, Cys75, and Cys78. Residue Lys84 is modified to N6-acetyllysine. Residue Cys92 participates in [2Fe-2S] cluster binding. In terms of domain architecture, 4Fe-4S His(Cys)3-ligated-type spans 108-147 (KSKKAREGVMEFLLANHPLDCPICDQGGECDLQDQSMMFG). The [4Fe-4S] cluster site is built by His124, Cys128, Cys131, Cys137, Cys176, Cys179, Cys182, and Cys226. The region spanning 245-301 (TRKTESIDVMDAVGSNIVVSTRTGEVMRILPRMHEDINEEWISDKTRFAYDGLKRQR) is the 4Fe-4S Mo/W bis-MGD-type domain. 3 positions are modified to N6-acetyllysine: Lys467, Lys499, and Lys709.

It belongs to the complex I 75 kDa subunit family. In terms of assembly, core subunit of respiratory chain NADH dehydrogenase (Complex I) which is composed of 45 different subunits. This is the largest subunit of complex I and it is a component of the iron-sulfur (IP) fragment of the enzyme. Complex I associates with ubiquinol-cytochrome reductase complex (Complex III) to form supercomplexes. Interacts with MDM2 and AKAP1. Requires [2Fe-2S] cluster as cofactor. The cofactor is [4Fe-4S] cluster.

The protein localises to the mitochondrion inner membrane. It catalyses the reaction a ubiquinone + NADH + 5 H(+)(in) = a ubiquinol + NAD(+) + 4 H(+)(out). Functionally, core subunit of the mitochondrial membrane respiratory chain NADH dehydrogenase (Complex I) which catalyzes electron transfer from NADH through the respiratory chain, using ubiquinone as an electron acceptor. Essential for catalysing the entry and efficient transfer of electrons within complex I. Plays a key role in the assembly and stability of complex I and participates in the association of complex I with ubiquinol-cytochrome reductase complex (Complex III) to form supercomplexes. The polypeptide is NADH-ubiquinone oxidoreductase 75 kDa subunit, mitochondrial (NDUFS1) (Macaca fascicularis (Crab-eating macaque)).